Consider the following 142-residue polypeptide: Large ribosomal subunit protein uL11 (142 aa).

The protein belongs to the universal ribosomal protein uL11 family. In terms of assembly, part of the ribosomal stalk of the 50S ribosomal subunit. Interacts with L10 and the large rRNA to form the base of the stalk. L10 forms an elongated spine to which L12 dimers bind in a sequential fashion forming a multimeric L10(L12)X complex. One or more lysine residues are methylated.

In terms of biological role, forms part of the ribosomal stalk which helps the ribosome interact with GTP-bound translation factors. The protein is Large ribosomal subunit protein uL11 of Colwellia psychrerythraea (strain 34H / ATCC BAA-681) (Vibrio psychroerythus).